Consider the following 419-residue polypeptide: Squamosa promoter-binding-like protein 2 (419 aa).

Residues 77 to 96 (SAEVRTHNFTSETGESLPGE) are disordered. The segment at 166 to 243 (TPHCQVEGCN…SDHNARRRKP (78 aa)) adopts an SBP-type zinc-finger fold. Cys-169, Cys-174, Cys-191, His-194, Cys-210, Cys-213, His-217, and Cys-229 together coordinate Zn(2+). The short motif at 226 to 242 (KRSCRRRLSDHNARRRK) is the Bipartite nuclear localization signal element. The interval 230-249 (RRRLSDHNARRRKPNPGRTY) is disordered.

Zn(2+) is required as a cofactor.

It localises to the nucleus. In terms of biological role, trans-acting factor that binds specifically to the consensus nucleotide sequence 5'-TNCGTACAA-3'. In Arabidopsis thaliana (Mouse-ear cress), this protein is Squamosa promoter-binding-like protein 2 (SPL2).